The chain runs to 416 residues: Cyclin-L1-1 (416 aa).

The segment at Lys286–His416 is disordered. Composition is skewed to basic and acidic residues over residues Pro304–Gly315, Ser328–Lys374, Arg384–Asp393, and Arg401–Lys410.

It belongs to the cyclin family. Cyclin L subfamily. Forms a complex with CDKG1. Interacts with MOS4 and associates with the spliceosome.

It localises to the nucleus. Functionally, cognate cyclin for CDKG1. Required for synapsis and male meiosis, and for the proper splicing of specific resistance (R) genes. Involved in regulation of DNA methylation and transcriptional silencing. This is Cyclin-L1-1 (CYCL1-1) from Arabidopsis thaliana (Mouse-ear cress).